The chain runs to 123 residues: ATP synthase epsilon chain (123 aa).

The protein belongs to the ATPase epsilon chain family. F-type ATPases have 2 components, CF(1) - the catalytic core - and CF(0) - the membrane proton channel. CF(1) has five subunits: alpha(3), beta(3), gamma(1), delta(1), epsilon(1). CF(0) has three main subunits: a, b and c.

It is found in the cell inner membrane. Its function is as follows. Produces ATP from ADP in the presence of a proton gradient across the membrane. This chain is ATP synthase epsilon chain, found in Helicobacter pylori (strain G27).